We begin with the raw amino-acid sequence, 359 residues long: S-adenosylmethionine:tRNA ribosyltransferase-isomerase (359 aa).

The protein belongs to the QueA family. As to quaternary structure, monomer.

The protein resides in the cytoplasm. The enzyme catalyses 7-aminomethyl-7-carbaguanosine(34) in tRNA + S-adenosyl-L-methionine = epoxyqueuosine(34) in tRNA + adenine + L-methionine + 2 H(+). It participates in tRNA modification; tRNA-queuosine biosynthesis. Transfers and isomerizes the ribose moiety from AdoMet to the 7-aminomethyl group of 7-deazaguanine (preQ1-tRNA) to give epoxyqueuosine (oQ-tRNA). The sequence is that of S-adenosylmethionine:tRNA ribosyltransferase-isomerase from Synechococcus elongatus (strain ATCC 33912 / PCC 7942 / FACHB-805) (Anacystis nidulans R2).